Consider the following 380-residue polypeptide: Cystathionine gamma-synthase (380 aa).

Residue lysine 195 is modified to N6-(pyridoxal phosphate)lysine.

The protein belongs to the trans-sulfuration enzymes family. In terms of assembly, homotetramer. Pyridoxal 5'-phosphate is required as a cofactor.

It is found in the cytoplasm. The catalysed reaction is O-succinyl-L-homoserine + L-cysteine = L,L-cystathionine + succinate + H(+). It functions in the pathway amino-acid biosynthesis; L-methionine biosynthesis via de novo pathway; L-cystathionine from O-succinyl-L-homoserine: step 1/1. Its activity is regulated as follows. Four natural products, alpha-lapachone, 9-hydroxy-alpha-lapachone, Paulownin, and Yangambin, show strong inhibitory activities against CGS. All these four inhibitors prevent the binding of OSHS to CGS in a non-competitive fashion. These compounds are specific inhibitors against CGS from H.pylori relative to E.coli since they exhibit very low inhibition activities against CGS from E.coli. Its function is as follows. Catalyzes the formation of L-cystathionine from O-succinyl-L-homoserine (OSHS) and L-cysteine, via a gamma-replacement reaction. In the absence of thiol, catalyzes gamma-elimination to form 2-oxobutanoate, succinate and ammonia. The sequence is that of Cystathionine gamma-synthase (metB) from Helicobacter pylori (Campylobacter pylori).